A 221-amino-acid polypeptide reads, in one-letter code: GTP-binding nuclear protein Ran/TC4 (221 aa).

The 165-residue stretch at 10–174 (DYPSFKLVIV…LYLARKLAGD (165 aa)) folds into the Small GTPase Ran-type domain. 21-28 (DGGTGKTT) is a GTP binding site. The tract at residues 40–48 (KKYEPTIGV) is switch-I. GTP-binding positions include G71, 125–128 (NKVD), and 153–155 (SAK). The interval 71–87 (GQEKFGGLRDGYYIHGQ) is switch-II.

Belongs to the small GTPase superfamily. Ran family. In terms of assembly, found in a nuclear export complex with RanGTP, exportin and pre-miRNA.

Its subcellular location is the nucleus. Its function is as follows. GTP-binding protein involved in nucleocytoplasmic transport. Required for the import of protein into the nucleus and also for RNA export. Involved in chromatin condensation and control of cell cycle. The chain is GTP-binding nuclear protein Ran/TC4 from Vicia faba (Broad bean).